The following is a 296-amino-acid chain: Probable redox regulatory protein BQ2027_MB0506C (296 aa).

This sequence belongs to the Rv0495c family.

In terms of biological role, essential for maintaining intracellular redox homeostasis. The sequence is that of Probable redox regulatory protein BQ2027_MB0506C from Mycobacterium bovis (strain ATCC BAA-935 / AF2122/97).